We begin with the raw amino-acid sequence, 193 residues long: Dual-action ribosomal maturation protein DarP (193 aa).

The segment covering 1 to 10 (MRGRDEETGE) has biased composition (basic and acidic residues). Disordered stretches follow at residues 1 to 20 (MRGR…SQQR) and 171 to 193 (QEQG…EDDE). Over residues 178-193 (GDSELEDGESASEDDE) the composition is skewed to acidic residues.

Belongs to the DarP family.

The protein resides in the cytoplasm. In terms of biological role, member of a network of 50S ribosomal subunit biogenesis factors which assembles along the 30S-50S interface, preventing incorrect 23S rRNA structures from forming. Promotes peptidyl transferase center (PTC) maturation. In Xanthomonas axonopodis pv. citri (strain 306), this protein is Dual-action ribosomal maturation protein DarP.